The chain runs to 240 residues: Protein RoBo-1 (240 aa).

Positions 1 to 26 are cleaved as a signal peptide; sequence MSWFLVLKCLLTVCIISHLSVSSTES. An N-linked (GlcNAc...) asparagine glycan is attached at Asn-42. Cystine bridges form between Cys-47–Cys-76, Cys-81–Cys-102, Cys-103–Cys-108, Cys-127–Cys-151, and Cys-144–Cys-171. Asn-153 carries N-linked (GlcNAc...) asparagine glycosylation.

It belongs to the CNF-like-inhibitor family. Post-translationally, N-glycosylated. In terms of tissue distribution, expressed abundantly in bone, including the lengthening growth plate where cartilage is remodeled into bone.

The protein resides in the secreted. May play a novel role in the growth or remodeling of bone. This chain is Protein RoBo-1, found in Rattus norvegicus (Rat).